The following is a 423-amino-acid chain: Histidine--tRNA ligase (423 aa).

Belongs to the class-II aminoacyl-tRNA synthetase family. Homodimer.

Its subcellular location is the cytoplasm. The enzyme catalyses tRNA(His) + L-histidine + ATP = L-histidyl-tRNA(His) + AMP + diphosphate + H(+). The chain is Histidine--tRNA ligase from Haemophilus influenzae (strain 86-028NP).